The sequence spans 444 residues: Ribosomal protein uS12 methylthiotransferase RimO (444 aa).

The MTTase N-terminal domain maps to 4–118 (IKYGVVSLGC…LSDAIKKSIE (115 aa)). Residues Cys13, Cys48, Cys81, Cys155, Cys159, and Cys162 each coordinate [4Fe-4S] cluster. The Radical SAM core domain maps to 141-373 (TTQKHYAYLR…MQRDIVKSIN (233 aa)). Residues 374-440 (ADKVNKVYKV…EYDLIGVVCD (67 aa)) form the TRAM domain.

The protein belongs to the methylthiotransferase family. RimO subfamily. It depends on [4Fe-4S] cluster as a cofactor.

The protein resides in the cytoplasm. The enzyme catalyses L-aspartate(89)-[ribosomal protein uS12]-hydrogen + (sulfur carrier)-SH + AH2 + 2 S-adenosyl-L-methionine = 3-methylsulfanyl-L-aspartate(89)-[ribosomal protein uS12]-hydrogen + (sulfur carrier)-H + 5'-deoxyadenosine + L-methionine + A + S-adenosyl-L-homocysteine + 2 H(+). Its function is as follows. Catalyzes the methylthiolation of an aspartic acid residue of ribosomal protein uS12. The sequence is that of Ribosomal protein uS12 methylthiotransferase RimO from Clostridium tetani (strain Massachusetts / E88).